The following is a 473-amino-acid chain: Cytochrome P450 716A2 (473 aa).

Residues 1–21 form a helical membrane-spanning segment; the sequence is MYLTIIFLFISSIIFPLLFFL. Position 420 (cysteine 420) interacts with heme.

The protein belongs to the cytochrome P450 family. The cofactor is heme.

The protein localises to the membrane. Functionally, possesses triterpene oxidizing activity. Catalyzes the C28 hydroxylation of alpha-amyrin, beta-amyrin, and lupeol, producing uvaol, erythrodiol, and betulin, respectively. Catalyzes the C28 carboxylation of alpha- and beta-amyrin. Possesses 22alpha-hydroxylation activity against alpha- and beta-amaryn. The polypeptide is Cytochrome P450 716A2 (Arabidopsis thaliana (Mouse-ear cress)).